A 279-amino-acid chain; its full sequence is Large ribosomal subunit protein uL2 (279 aa).

The tract at residues 216–279 is disordered; that stretch reads KRPSVRGVVM…IQKRKRNRNR (64 aa). Residues 270–279 show a composition bias toward basic residues; it reads IQKRKRNRNR.

It belongs to the universal ribosomal protein uL2 family. In terms of assembly, part of the 50S ribosomal subunit. Forms a bridge to the 30S subunit in the 70S ribosome.

One of the primary rRNA binding proteins. Required for association of the 30S and 50S subunits to form the 70S ribosome, for tRNA binding and peptide bond formation. It has been suggested to have peptidyltransferase activity; this is somewhat controversial. Makes several contacts with the 16S rRNA in the 70S ribosome. This is Large ribosomal subunit protein uL2 from Leptospira interrogans serogroup Icterohaemorrhagiae serovar copenhageni (strain Fiocruz L1-130).